The chain runs to 137 residues: Small ribosomal subunit protein uS12 (137 aa).

Residues 1 to 55 are disordered; sequence MPTINQLVRKPRQSKSKKSDSPALNRNFNSKKKKFTDLNSPQKRGVCTRVGTMTP. Residue D102 is modified to 3-methylthioaspartic acid. The tract at residues 118–137 is disordered; it reads SGVDGRRQGRSLYGTKKPKK.

This sequence belongs to the universal ribosomal protein uS12 family. As to quaternary structure, part of the 30S ribosomal subunit. Contacts proteins S8 and S17. May interact with IF1 in the 30S initiation complex.

Its function is as follows. With S4 and S5 plays an important role in translational accuracy. Interacts with and stabilizes bases of the 16S rRNA that are involved in tRNA selection in the A site and with the mRNA backbone. Located at the interface of the 30S and 50S subunits, it traverses the body of the 30S subunit contacting proteins on the other side and probably holding the rRNA structure together. The combined cluster of proteins S8, S12 and S17 appears to hold together the shoulder and platform of the 30S subunit. The protein is Small ribosomal subunit protein uS12 of Staphylococcus saprophyticus subsp. saprophyticus (strain ATCC 15305 / DSM 20229 / NCIMB 8711 / NCTC 7292 / S-41).